The chain runs to 109 residues: Nucleoid-associated protein VV2410 (109 aa).

A disordered region spans residues 1 to 22 (MFGKGGMGNLMKQAQQMQERMQ).

The protein belongs to the YbaB/EbfC family. In terms of assembly, homodimer.

It localises to the cytoplasm. It is found in the nucleoid. In terms of biological role, binds to DNA and alters its conformation. May be involved in regulation of gene expression, nucleoid organization and DNA protection. This is Nucleoid-associated protein VV2410 from Vibrio vulnificus (strain YJ016).